Consider the following 214-residue polypeptide: Histone H1.1 (214 aa).

The disordered stretch occupies residues 1-43; that stretch reads MSETAPVPQPASVAPEKPAATKKTRKPAKAAVPRKKPAGPSVS. Serine 2 is modified (N-acetylserine). Residues serine 2 and serine 12 each carry the phosphoserine modification. Lysine 17 carries the N6-acetyllysine modification. The span at 20 to 37 shows a compositional bias: basic residues; sequence ATKKTRKPAKAAVPRKKP. An N6-(beta-hydroxybutyryl)lysine modification is found at lysine 36. In terms of domain architecture, H15 spans 38-111; sequence AGPSVSELIV…GAAGSFKLNK (74 aa). Serine 43 carries the phosphoserine modification. The residue at position 54 (lysine 54) is an N6-(beta-hydroxybutyryl)lysine. At arginine 56 the chain carries Citrulline. At lysine 66 the chain carries N6-(beta-hydroxybutyryl)lysine. Serine 67 carries the phosphoserine modification. N6-acetyllysine is present on lysine 77. Residue lysine 87 is modified to N6-(beta-hydroxybutyryl)lysine. Lysine 92 carries the post-translational modification N6-(beta-hydroxybutyryl)lysine; alternate. At lysine 92 the chain carries N6-acetyllysine; alternate. Residues 93-214 are disordered; the sequence is GTLVQTKGTG…KPKKAAPKKK (122 aa). Serine 106 is modified (phosphoserine). Lysine 108 is subject to N6-(beta-hydroxybutyryl)lysine. Low complexity predominate over residues 116-144; it reads KASTTKVTVKAKASGAAKKPKKTAGAAAK. N6-acetyllysine is present on lysine 121. 2 stretches are compositionally biased toward basic residues: residues 145 to 179 and 186 to 214; these read KTVK…KKVA and KAVK…PKKK. A Phosphothreonine modification is found at threonine 202.

This sequence belongs to the histone H1/H5 family. As to quaternary structure, interacts with DFFB. H1 histones are progressively phosphorylated during the cell cycle, becoming maximally phosphorylated during late G2 phase and M phase, and being dephosphorylated sharply thereafter. Post-translationally, citrullination at Arg-56 (H1R54ci) by PADI4 takes place within the DNA-binding site of H1 and results in its displacement from chromatin and global chromatin decondensation, thereby promoting pluripotency and stem cell maintenance.

Its subcellular location is the nucleus. It localises to the chromosome. In terms of biological role, H1 histones bind to linker DNA between nucleosomes forming the macromolecular structure known as the chromatin fiber. H1 histones are necessary for the condensation of nucleosome chains into higher-order structured fibers. Also acts as a regulator of individual gene transcription through chromatin remodeling. The protein is Histone H1.1 of Rattus norvegicus (Rat).